The following is a 410-amino-acid chain: Retrovirus-related Pol polyprotein from type-1 retrotransposable element R1 2 (410 aa).

The Reverse transcriptase domain maps to 1–118 (GCPQGSIGGP…SCFRYLGVNV (118 aa)). The tract at residues 254-410 (SSVIKLERLV…RLNLELDVNG (157 aa)) is nucleic acid-binding endonuclease.

The enzyme catalyses DNA(n) + a 2'-deoxyribonucleoside 5'-triphosphate = DNA(n+1) + diphosphate. The protein is Retrovirus-related Pol polyprotein from type-1 retrotransposable element R1 2 of Nasonia vitripennis (Parasitic wasp).